A 232-amino-acid polypeptide reads, in one-letter code: TIR domain-containing adapter molecule 2 (232 aa).

A compositionally biased stretch (basic and acidic residues) spans 1 to 39; sequence MGVGKSKLDKCPLSWHKKDSVDADQDGHESDSKNSEEAC. The tract at residues 1 to 70 is disordered; the sequence is MGVGKSKLDK…EAKGAGPEEQ (70 aa). Residue Gly-2 is the site of N-myristoyl glycine attachment. The TIR domain maps to 74-226; the sequence is EFLKFVILHA…SIWKETRSVS (153 aa). A Phosphotyrosine modification is found at Tyr-164.

As to quaternary structure, homodimer. Interacts with TLR4, TICAM1, IRF3 and IRF7 in response to LPS. Interacts with IL1R1, IL1RAP, IRAK2, IRAK3 and TRAF6. Interacts with protein kinase-inactive mutants of IRAK1 and IRAK4. Isoform 1 interacts with isoform 2; the interaction occurs in late endosomes and disrupts the interaction between isoform 1 and TICAM1. Interacts with MYD88; the interaction decreases after IL-18 stimulation in a time-dependent manner. Interacts with IL18R1 and IL18RAP. Interacts with TLR2. Interacts with RAB11FIP2. Post-translationally, myristoylated. Required for membrane association which is critical for its ability to initiate efficient signaling. Phosphorylated by PRKCE in response to LPS. Phosphorylation is essential for its function. It is depleted from the membrane upon phosphorylation. Tyrosine phosphorylation is inhibited by phosphatase PTPN4.

The protein localises to the cytoplasm. Its subcellular location is the golgi apparatus. It is found in the cell membrane. The protein resides in the early endosome. It localises to the late endosome. The protein localises to the endoplasmic reticulum. Its subcellular location is the cell projection. It is found in the phagocytic cup. Functions as a sorting adapter in different signaling pathways to facilitate downstream signaling leading to type I interferon induction. In TLR4 signaling, physically bridges TLR4 and TICAM1 and functionally transmits signal to TICAM1 in early endosomes after endocytosis of TLR4. In TLR2 signaling, physically bridges TLR2 and MYD88 and is required for the TLR2-dependent movement of MYD88 to endosomes following ligand engagement. Involved in IL-18 signaling and is proposed to function as a sorting adapter for MYD88 in IL-18 signaling during adaptive immune response. Forms a complex with RAB11FIP2 that is recruited to the phagosomes to promote the activation of the actin-regulatory GTPases RAC1 and CDC42 and subsequent phagocytosis of Gram-negative bacteria. The protein is TIR domain-containing adapter molecule 2 (Ticam2) of Mus musculus (Mouse).